Consider the following 260-residue polypeptide: Adenosylcobinamide-GDP ribazoletransferase (260 aa).

The next 6 helical transmembrane spans lie at 40–60, 64–84, 117–137, 142–162, 188–208, and 209–229; these read AFPFAGIVIGFIPALALLLLL, ADPLMAALIALSIQVLVTGAL, YGAIALILSLAIRAAALAVIA, PLTAALAIPAVAALSRGAIAW, QFALASAGLVAALLIWPAFGL, and RPLVASLLATGIAGFAFTAFI.

It belongs to the CobS family. Mg(2+) is required as a cofactor.

It is found in the cell inner membrane. It carries out the reaction alpha-ribazole + adenosylcob(III)inamide-GDP = adenosylcob(III)alamin + GMP + H(+). It catalyses the reaction alpha-ribazole 5'-phosphate + adenosylcob(III)inamide-GDP = adenosylcob(III)alamin 5'-phosphate + GMP + H(+). It functions in the pathway cofactor biosynthesis; adenosylcobalamin biosynthesis; adenosylcobalamin from cob(II)yrinate a,c-diamide: step 7/7. Joins adenosylcobinamide-GDP and alpha-ribazole to generate adenosylcobalamin (Ado-cobalamin). Also synthesizes adenosylcobalamin 5'-phosphate from adenosylcobinamide-GDP and alpha-ribazole 5'-phosphate. This chain is Adenosylcobinamide-GDP ribazoletransferase, found in Rhizobium johnstonii (strain DSM 114642 / LMG 32736 / 3841) (Rhizobium leguminosarum bv. viciae).